The following is a 138-amino-acid chain: ATP synthase epsilon chain (138 aa).

It belongs to the ATPase epsilon chain family. As to quaternary structure, F-type ATPases have 2 components, CF(1) - the catalytic core - and CF(0) - the membrane proton channel. CF(1) has five subunits: alpha(3), beta(3), gamma(1), delta(1), epsilon(1). CF(0) has three main subunits: a, b and c.

The protein localises to the cell inner membrane. Produces ATP from ADP in the presence of a proton gradient across the membrane. In Polynucleobacter necessarius subsp. necessarius (strain STIR1), this protein is ATP synthase epsilon chain.